We begin with the raw amino-acid sequence, 513 residues long: MGHNGSWVSPNTSHPRNTSGAQAGANSSAFGELSEAQLYRQFTTTVQVVIFIGSLLGNFTVLWSTCRTTVFKSVTNRFIKNLACSGICASVVCVPFDIILSTSPHCCWWIYTMLFCKVLKFLHKVFCSVTVLSFPAIALDRYYSVLYPLERKISDAKSRELVMYIWAHAVVASVPVFAVTNVADIYATSTCTEVWSNSLGHLVYVLIYNVTTVIVPVAVVFLFLILIRRALSASQKKKVIIAALRTPQNTISIPYASQREAELHATLLSMVTVFILCSVPYATLVVYQTVLNVPNTSVFLLLTAIWLPKVSLLANPVLFLTVNRSVRKCLVGTLVQLHHRYSRRNVVSTGSGVVEPSLEPSMRSGSQLLEMFHIGQQQIFKPSEDEEESEAKYLGSTDFQAKEVLTSSPEGEESQLAPSVPPPGTVDSVSRVSPVAPVEPGIFPDKYSLQFGFGPFELPPQWLSETRNSKKRLLPPLGNTPEELIQTKVPRVSRVERKMSRNNKVSIFPKVDS.

A disordered region spans residues Met1 to Ala25. Residues Met1 to Gln41 lie on the Extracellular side of the membrane. Asn4, Asn11, Asn17, and Asn26 each carry an N-linked (GlcNAc...) asparagine glycan. A helical membrane pass occupies residues Phe42–Ser64. The Cytoplasmic portion of the chain corresponds to Thr65–Arg77. A helical membrane pass occupies residues Phe78–Ile98. The Extracellular segment spans residues Ile99 to Trp108. Residues Trp109–Val129 traverse the membrane as a helical segment. Residues Thr130–Lys157 lie on the Cytoplasmic side of the membrane. Residues Ser158–Phe177 form a helical membrane-spanning segment. The Extracellular portion of the chain corresponds to Ala178–Tyr204. A helical transmembrane segment spans residues Val205–Ile225. Topologically, residues Leu226 to His264 are cytoplasmic. The chain crosses the membrane as a helical span at residues Ala265–Val285. The Extracellular portion of the chain corresponds to Val286–Leu301. A helical transmembrane segment spans residues Leu302–Val322. The Cytoplasmic portion of the chain corresponds to Asn323–Ser513. Positions Val404 to Val432 are disordered.

The protein belongs to the G-protein coupled receptor 1 family. Expressed in brain, lung, heart, stomach, intestine, cultured aortic smooth muscle cells and cardiac myocytes.

The protein localises to the cell membrane. Its function is as follows. Orphan receptor involved in normal circadian rhythm behavior. Acts through the G-protein subclass G(z)-alpha and has an agonist-independent basal activity to repress cAMP production. In Rattus norvegicus (Rat), this protein is Probable G-protein coupled receptor 176 (Gpr176).